A 105-amino-acid polypeptide reads, in one-letter code: Large ribosomal subunit protein uL24 (105 aa).

Belongs to the universal ribosomal protein uL24 family. Part of the 50S ribosomal subunit.

One of two assembly initiator proteins, it binds directly to the 5'-end of the 23S rRNA, where it nucleates assembly of the 50S subunit. Functionally, one of the proteins that surrounds the polypeptide exit tunnel on the outside of the subunit. The sequence is that of Large ribosomal subunit protein uL24 from Pseudothermotoga lettingae (strain ATCC BAA-301 / DSM 14385 / NBRC 107922 / TMO) (Thermotoga lettingae).